Reading from the N-terminus, the 135-residue chain is Fluoride-specific ion channel FluC (135 aa).

4 helical membrane-spanning segments follow: residues 12–32 (FLVIGLGAAFGAWTRWLLGLS), 42–62 (LGTLAANVIGGYLVGVAVGIF), 70–90 (LAWKLFAITGFLGGLTTFSTF), and 106–126 (AIGLASVHLAGSLTATYLGLL). Na(+) contacts are provided by glycine 82 and threonine 85.

It belongs to the fluoride channel Fluc/FEX (TC 1.A.43) family.

The protein localises to the cell inner membrane. The enzyme catalyses fluoride(in) = fluoride(out). Its activity is regulated as follows. Na(+) is not transported, but it plays an essential structural role and its presence is essential for fluoride channel function. Its function is as follows. Fluoride-specific ion channel. Important for reducing fluoride concentration in the cell, thus reducing its toxicity. This is Fluoride-specific ion channel FluC from Dechloromonas aromatica (strain RCB).